The chain runs to 1437 residues: MKISKVREENRGAKLTVNAKTAVVSENRSQEGILYNDPSRYGKSRKNDEDRDRYIESRLKSSGKLYRIFNEDKNKRETDELQWFLSEIVKKINRRNGLVLSDMLSVDDRAFEKAFEKYAELSYTNRRNKVSGSPAFETCGVDAATAERLKGIISETNFINRIKNNIDNKVSEDIIDRIIAKYLKKSLCRERVKRGLKKLLMNAFDLPYSDPDIDVQRDFIDYVLEDFYHVRAKSQVSRSIKNMNMPVQPEGDGKFAITVSKGGTESGNKRSAEKEAFKKFLSDYASLDERVRDDMLRRMRRLVVLYFYGSDDSKLSDVNEKFDVWEDHAARRVDNREFIKLPLENKLANGKTDKDAERIRKNTVKELYRNQNIGCYRQAVKAVEEDNNGRYFDDKMLNMFFIHRIEYGVEKIYANLKQVTEFKARTGYLSEKIWKDLINYISIKYIAMGKAVYNYAMDELNASDKKEIELGKISEEYLSGISSFDYELIKAEEMLQRETAVYVAFAARHLSSQTVELDSENSDFLLLKPKGTMDKNDKNKLASNNILNFLKDKETLRDTILQYFGGHSLWTDFPFDKYLAGGKDDVDFLTDLKDVIYSMRNDSFHYATENHNNGKWNKELISAMFEHETERMTVVMKDKFYSNNLPMFYKNDDLKKLLIDLYKDNVERASQVPSFNKVFVRKNFPALVRDKDNLGIELDLKADADKGENELKFYNALYYMFKEIYYNAFLNDKNVRERFITKATKVADNYDRNKERNLKDRIKSAGSDEKKKLREQLQNYIAENDFGQRIKNIVQVNPDYTLAQICQLIMTEYNQQNNGCMQKKSAARKDINKDSYQHYKMLLLVNLRKAFLEFIKENYAFVLKPYKHDLCDKADFVPDFAKYVKPYAGLISRVAGSSELQKWYIVSRFLSPAQANHMLGFLHSYKQYVWDIYRRASETGTEINHSIAEDKIAGVDITDVDAVIDLSVKLCGTISSEISDYFKDDEVYAEYISSYLDFEYDGGNYKDSLNRFCNSDAVNDQKVALYYDGEHPKLNRNIILSKLYGERRFLEKITDRVSRSDIVEYYKLKKETSQYQTKGIFDSEDEQKNIKKFQEMKNIVEFRDLMDYSEIADELQGQLINWIYLRERDLMNFQLGYHYACLNNDSNKQATYVTLDYQGKKNRKINGAILYQICAMYINGLPLYYVDKDSSEWTVSDGKESTGAKIGEFYRYAKSFENTSDCYASGLEIFENISEHDNITELRNYIEHFRYYSSFDRSFLGIYSEVFDRFFTYDLKYRKNVPTILYNILLQHFVNVRFEFVSGKKMIGIDKKDRKIAKEKECARITIREKNGVYSEQFTYKLKNGTVYVDARDKRYLQSIIRLLFYPEKVNMDEMIEVKEKKKPSDNNTGKGYSKRDRQQDRKEYDKYKEKKKKEGNFLSGMGGNINWDEINAQLKN.

2 HEPN-like fold regions span residues 460–626 (LNAS…AMFE) and 1101–1437 (EFRD…QLKN). Residues 1377–1419 (EVKEKKKPSDNNTGKGYSKRDRQQDRKEYDKYKEKKKKEGNFL) form a disordered region. The span at 1394–1416 (SKRDRQQDRKEYDKYKEKKKKEG) shows a compositional bias: basic and acidic residues.

The protein belongs to the CRISPR-associated endoribonuclease Cas13a family. It depends on a divalent metal cation as a cofactor.

Its activity is regulated as follows. Target RNA acts as an activator for non-specific ssRNA degradation. CRISPR (clustered regularly interspaced short palindromic repeat), is an adaptive immune system that provides protection against mobile genetic elements (viruses, transposable elements and conjugative plasmids). CRISPR clusters contain sequences complementary to antecedent mobile elements and target invading nucleic acids. Unlike many single-component effectors, this CRISPR-Cas system targets RNA. CRISPR clusters are transcribed from pre-CRISPR RNA (crRNA) and processed into crRNA by this protein. Cleaves linear target ssRNA in a pre-crRNA-dependent fashion, preferentially around A residues. Binding a viable target RNA target activates this protein for non-specific RNA degradation in vitro (called collateral RNA degradation), but it is not very sensitive as it requires nanomolar levels of viable target RNA. The protein is CRISPR-associated endoribonuclease Cas13a of Lachnospiraceae bacterium (strain NK4A179).